Here is a 1854-residue protein sequence, read N- to C-terminus: Calcium-channel protein cch1 (1854 aa).

A compositionally biased stretch (low complexity) spans 1–15 (MSSSSNSDPSSSPDN). The tract at residues 1–33 (MSSSSNSDPSSSPDNTDFIPLKDNPKDTSSYIN) is disordered. Asparagine 40 carries N-linked (GlcNAc...) asparagine glycosylation. Transmembrane regions (helical) follow at residues 184 to 204 (HPLY…LLMI), 220 to 240 (IIVI…LFGF), and 274 to 294 (DFVA…QGIF). Asparagine 310 is a glycosylation site (N-linked (GlcNAc...) asparagine). The next 8 membrane-spanning stretches (helical) occupy residues 328 to 348 (PLVQ…ILGV), 427 to 447 (FFNS…TDIM), 461 to 481 (LFII…IAVV), 514 to 534 (YLFY…VTLC), 549 to 569 (LIFY…RFFA), 581 to 601 (YTNL…LPSI), 606 to 626 (VAFG…ILLI), and 642 to 662 (QLLN…LCAV). N-linked (GlcNAc...) asparagine glycosylation is present at asparagine 699. Residues 723-743 (FFTLWFLFSNNVVLSMFIAVI) form a helical membrane-spanning segment. Asparagine 786 carries N-linked (GlcNAc...) asparagine glycosylation. 3 helical membrane-spanning segments follow: residues 946–966 (VFIY…TPIY), 980–1000 (FVWT…IKII), and 1021–1041 (FFVL…HALL). Residue asparagine 1058 is glycosylated (N-linked (GlcNAc...) asparagine). The next 2 membrane-spanning stretches (helical) occupy residues 1075–1095 (FFKI…FALW) and 1148–1168 (FPHA…VDIM). Asparagine 1184 is a glycosylation site (N-linked (GlcNAc...) asparagine). 4 consecutive transmembrane segments (helical) span residues 1193–1213 (FVLF…AIII), 1274–1294 (FTGL…PCPI), 1302–1322 (SIFL…VYGL), and 1331–1351 (FWNM…IAIL). N-linked (GlcNAc...) asparagine glycosylation is present at asparagine 1356. 3 helical membrane passes run 1358–1378 (SLTL…IPKF), 1393–1413 (PSIF…AIAF), and 1486–1506 (FIAW…TVVF). Residues asparagine 1508 and asparagine 1773 are each glycosylated (N-linked (GlcNAc...) asparagine). Residues 1764–1792 (TIASGEGDDNHSVEDHLKVPTDNEPRRSP) are disordered. Residues 1771–1790 (DDNHSVEDHLKVPTDNEPRR) are compositionally biased toward basic and acidic residues.

The protein belongs to the calcium channel alpha-1 subunit (TC 1.A.1.11) family. As to quaternary structure, interacts with yam8 to form a Ca(2+) influx channel.

The protein resides in the cell membrane. Voltage-gated, high-affinity calcium channel that functions together with yam8 to mediate calcium entry into cells. Required during conditions of environmental stress. The protein is Calcium-channel protein cch1 (cch1) of Schizosaccharomyces pombe (strain 972 / ATCC 24843) (Fission yeast).